A 157-amino-acid polypeptide reads, in one-letter code: Endoribonuclease YbeY (157 aa).

Zn(2+)-binding residues include His-113, His-117, and His-123.

It belongs to the endoribonuclease YbeY family. It depends on Zn(2+) as a cofactor.

Its subcellular location is the cytoplasm. Its function is as follows. Single strand-specific metallo-endoribonuclease involved in late-stage 70S ribosome quality control and in maturation of the 3' terminus of the 16S rRNA. The chain is Endoribonuclease YbeY from Ehrlichia ruminantium (strain Gardel).